A 95-amino-acid polypeptide reads, in one-letter code: MEIHVRNVDPYHLKEIDKRCKEIGKKLGRRYYRWEYINMMFEQHFNQEYSRNKEDKFDEAVSNVSITLDRQSDKLQEYIDATHELVAAMIKLNEE.

This is an uncharacterized protein from Bacillus anthracis.